A 209-amino-acid chain; its full sequence is Mitotic spindle checkpoint protein MAD2 (209 aa).

One can recognise an HORMA domain in the interval 15 to 198 (HGSAAIVSEF…TKIHKVDTLV (184 aa)).

Belongs to the MAD2 family. As to quaternary structure, part of the mitotic checkpoint complex (MCC); interacts with MAD1, CDC20-1, CDC20-2 and CDC20-5. Interacts with BUBR1 at chromocenters and with BUB3.1. Interacts with EIF4B3. In terms of tissue distribution, expressed in actively dividing tissues, early in organ development, in young leaves, lateral root primordia and root meristems.

It localises to the nucleus. The protein resides in the nucleus envelope. The protein localises to the chromosome. Its subcellular location is the centromere. It is found in the kinetochore. It localises to the cytoplasm. The protein resides in the cytoskeleton. The protein localises to the spindle. Required for the execution of the mitotic checkpoint which monitors the process of kinetochore-spindle attachment and delays the onset of anaphase when this process is not complete. It inhibits the activity of the anaphase promoting complex by sequestering CDC20 until all chromosomes are aligned at the metaphase plate. The chain is Mitotic spindle checkpoint protein MAD2 from Arabidopsis thaliana (Mouse-ear cress).